We begin with the raw amino-acid sequence, 287 residues long: Nuclease S1 (287 aa).

An N-terminal signal peptide occupies residues 1 to 20; that stretch reads MPRLLPISAATLALAQLTYG. Residues tryptophan 21, histidine 26, aspartate 65, and histidine 80 each contribute to the a divalent metal cation site. Substrate contacts are provided by residues 21 to 26, 65 to 71, 80 to 83, and 93 to 98; these read WGNLGH, DTYKYTD, HFID, and GVDYDR. Disulfide bonds link cysteine 92–cysteine 236 and cysteine 100–cysteine 105. Residues asparagine 112 and asparagine 122 are each glycosylated (N-linked (GlcNAc...) asparagine). A divalent metal cation is bound by residues histidine 135, aspartate 139, histidine 145, histidine 168, and aspartate 172. Positions 135–183 are substrate binding; it reads HIIGDIHQPLHDENLEAGGNGIDVTYDGETTNLHHIWDTNMPEEAAGGY. The N-linked (GlcNAc...) asparagine glycan is linked to asparagine 248.

This sequence belongs to the nuclease type I family. In terms of assembly, monomer. Zn(2+) serves as cofactor.

It carries out the reaction Endonucleolytic cleavage to 5'-phosphomononucleotide and 5'-phosphooligonucleotide end-products.. Its activity is regulated as follows. Inhibited by inorganic phosphate (Pi). In terms of biological role, hydrolyzes only single-stranded DNA and RNA without apparent specificity for bases. This chain is Nuclease S1, found in Aspergillus oryzae (strain ATCC 42149 / RIB 40) (Yellow koji mold).